Consider the following 342-residue polypeptide: Voltage-gated hydrogen channel 1 (342 aa).

Disordered stretches follow at residues 1-20 (MEGD…INPN) and 74-102 (FNDN…SEQK). Residues 1–148 (MEGDNCNKSR…KLRHILHSKP (148 aa)) are Cytoplasmic-facing. Residues 86 to 102 (QEQSTQNTMISMQSEQK) show a composition bias toward polar residues. The helical transmembrane segment at 149–169 (IHVAIIVLVVLDSFLVVGELL) threads the bilayer. Over 170–185 (IDLKVIIVPHGNPAPE) the chain is Extracellular. A helical transmembrane segment spans residues 186–208 (ILHGFSLSILSIFMVEIALKIIA). The Cytoplasmic portion of the chain corresponds to 209–217 (DHRHFIHHK). A helical membrane pass occupies residues 218–238 (VEVLDAVVVVISFGVDIALIF). Over 239-247 (VGESEALAA) the chain is Extracellular. Residues 248 to 268 (IGLLVILRLWRVFRIINGIIV) form a helical membrane-spanning segment. Over 269 to 342 (TVKTKADDRV…HSTTTASADV (74 aa)) the chain is Cytoplasmic. Residues 271–315 (KTKADDRVHEIKKKNSELELQIHNLEEKLSQKEQDMSRLHEILRC) adopt a coiled-coil conformation.

The protein belongs to the hydrogen channel family. Homodimer.

Its subcellular location is the membrane. It is found in the cell membrane. With respect to regulation, less sensitive to zinc ions as compared to the mammalian homologs. Mediates the voltage-dependent proton permeability of excitable membranes. Forms a proton-selective channel through which protons may pass in accordance with their electrochemical gradient. The protein is Voltage-gated hydrogen channel 1 (HVCN1) of Ciona intestinalis (Transparent sea squirt).